Here is a 448-residue protein sequence, read N- to C-terminus: Trigger factor (448 aa).

In terms of domain architecture, PPIase FKBP-type spans 167–253; it reads GSIVRVDFVE…LKDIKRRDIP (87 aa).

This sequence belongs to the FKBP-type PPIase family. Tig subfamily.

The protein localises to the cytoplasm. It catalyses the reaction [protein]-peptidylproline (omega=180) = [protein]-peptidylproline (omega=0). Functionally, involved in protein export. Acts as a chaperone by maintaining the newly synthesized protein in an open conformation. Functions as a peptidyl-prolyl cis-trans isomerase. In Borrelia turicatae (strain 91E135), this protein is Trigger factor.